The following is a 424-amino-acid chain: Folate-like transporter 3 (424 aa).

N-linked (GlcNAc...) asparagine glycosylation is present at asparagine 35. A run of 5 helical transmembrane segments spans residues 55–75 (VALIPSFLLTDVLLYKPILII), 78–98 (LSYFACWMIFVFGRSVWCMQL), 101–119 (LFYGWATATEIAYFAYIYV), 136–156 (ALLVGRFLAYTLAQLLIGLNW), and 164–184 (IINLVSMTFAVFLAAILPHVP). Residue asparagine 254 is glycosylated (N-linked (GlcNAc...) asparagine). 3 consecutive transmembrane segments (helical) span residues 313 to 333 (GLLFWMSQSHEIIILYICYII), 361 to 381 (LFGINTFVALALQSILTAIVI), and 392 to 412 (FVVYSGYHIVVATLFGIIFGI).

It belongs to the reduced folate carrier (RFC) transporter (TC 2.A.48) family.

It localises to the membrane. The polypeptide is Folate-like transporter 3 (folt-3) (Caenorhabditis elegans).